The primary structure comprises 173 residues: Ribosome maturation factor RimP (173 aa).

This sequence belongs to the RimP family.

It is found in the cytoplasm. Its function is as follows. Required for maturation of 30S ribosomal subunits. The polypeptide is Ribosome maturation factor RimP (Pelodictyon phaeoclathratiforme (strain DSM 5477 / BU-1)).